We begin with the raw amino-acid sequence, 842 residues long: MSYYWVALVLFTAQAFSIEGDRSASYQEKCISRRLINHYQLNKEIFGVGMCDGNNENEFRQKRRIVPTFQGNPRPRGELLASKFHVNSYNFEQTNSLVGLVNKIAQEYLNKCPPVIYYDSFVEKSDGLILENLFKTIPITFYHGEINADYEAKNKRFTSHIDCNCKSYILFLSDPLMTRKILGPQTESRVVLVSRSTQWRLRDFLSSELSSNIVNLLVIGESLMADPMRERPYVLYTHKLYADGLGSNTPVVLTSWIKGALSRPHINLFPSKFQFGFAGHRFQISAANQPPFIFRIRTLDSSGMGQLRWDGVEFRLLTMISKRLNFSIDITETPTRSNTRGVVDTIQEQIIERTVDIGMSGIYITQERLMDSAMSVGHSPDCAAFITLASKALPKYRAIMGPFQWPVWVALICVYLGGIFPIVFTDRLTLSHLMGNWGEVENMFWYVFGMFTNAFSFTGKYSWSNTRKNSTRLLIGAYWLFTIIITSCYTGSIIAFVTLPAFPDTVDSVLDLLGLFFRVGTLNNGGWETWFQNSTHIPTSRLYKKMEFVGSVDEGIGNVTQSFFWNYAFLGSKAQLEYLVQSNFSDENISRRSALHLSEECFALFQIGFLFPRESVYKIKIDSMILLAQQSGLIAKINNEVSWVMQRSSSGRLLQASSSNSLREIIQEERQLTTADTEGMFLLMALGYFLGATALVSEIVGGITNKCRQIIKRSRKSAASSWSSASSGSMLRTNAEQLSHDKRKANRREAAEVAQKMSFGMRELNLTRATLREIYGSYGAPETDHGQLDIVHTEFPNSSAKLNNIEDEESREALESLQRLDEFMDQMDNDGNPSSHTFRIDN.

Positions 1 to 15 (MSYYWVALVLFTAQA) are cleaved as a signal peptide. Residue asparagine 325 is glycosylated (N-linked (GlcNAc...) asparagine). 2 helical membrane passes run 405–425 (WPVW…IVFT) and 437–457 (WGEV…AFSF). The N-linked (GlcNAc...) asparagine glycan is linked to asparagine 469. The chain crosses the membrane as a helical span at residues 479 to 499 (WLFTIIITSCYTGSIIAFVTL). Asparagine 533, asparagine 558, asparagine 583, and asparagine 588 each carry an N-linked (GlcNAc...) asparagine glycan. The helical transmembrane segment at 680 to 700 (MFLLMALGYFLGATALVSEIV) threads the bilayer. The interval 722-745 (WSSASSGSMLRTNAEQLSHDKRKA) is disordered. Residues asparagine 765 and asparagine 797 are each glycosylated (N-linked (GlcNAc...) asparagine).

This sequence belongs to the glutamate-gated ion channel (TC 1.A.10.1) family. Expressed in the dorsal organ cool cells. In the antenna, expressed in approximately six neurons in the arista as well as five to ten neurons near the third chamber of the sacculus.

The protein resides in the cell membrane. In terms of biological role, integral part of a neural sensory system in the antenna that provides the neural basis for the response to environmental changes in temperature (thermosensation). Together with Ir25a and Ir93a, mediates the response of the dorsal organ cool cells, a trio of cool-responsive neurons, to cooling and is required for cool avoidance behavior. The chain is Ionotropic receptor 21a from Drosophila melanogaster (Fruit fly).